A 231-amino-acid polypeptide reads, in one-letter code: DNA mismatch repair protein MutH (231 aa).

It belongs to the MutH family.

It is found in the cytoplasm. Its function is as follows. Sequence-specific endonuclease that cleaves unmethylated GATC sequences. It is involved in DNA mismatch repair. This Shewanella woodyi (strain ATCC 51908 / MS32) protein is DNA mismatch repair protein MutH.